The chain runs to 354 residues: Glucose 1-dehydrogenase (354 aa).

Positions 1–27 are disordered; that stretch reads MKVIGVTRDDDGPQLLERERPSPDPGE. Basic and acidic residues predominate over residues 7-22; it reads TRDDDGPQLLERERPS. Asp-38 serves as a coordination point for Zn(2+). Thr-40 provides a ligand contact to substrate. Zn(2+) contacts are provided by His-63 and Glu-64. Residues 91-110 form a disordered region; that stretch reads PNGETNEYFRRGEPDMAPDG. Residues Glu-114 and Glu-150 each contribute to the substrate site. Zn(2+) is bound at residue Glu-150. NADP(+)-binding positions include 181–184, 204–205, 269–271, and 298–300; these read NGSL, RR, LGI, and TVN. Position 300 (Asn-300) interacts with substrate.

It belongs to the zinc-containing alcohol dehydrogenase family. Glucose 1-dehydrogenase subfamily. The cofactor is Zn(2+).

It carries out the reaction D-glucose + NAD(+) = D-glucono-1,5-lactone + NADH + H(+). It catalyses the reaction D-glucose + NADP(+) = D-glucono-1,5-lactone + NADPH + H(+). Catalyzes the NAD(P)(+)-dependent oxidation of D-glucose to D-gluconate via gluconolactone. Can utilize both NAD(+) and NADP(+) as electron acceptor. Is involved in the degradation of glucose through a modified Entner-Doudoroff pathway. The polypeptide is Glucose 1-dehydrogenase (Haloarcula marismortui (strain ATCC 43049 / DSM 3752 / JCM 8966 / VKM B-1809) (Halobacterium marismortui)).